Here is a 140-residue protein sequence, read N- to C-terminus: Putative pre-16S rRNA nuclease (140 aa).

The protein belongs to the YqgF nuclease family.

It is found in the cytoplasm. In terms of biological role, could be a nuclease involved in processing of the 5'-end of pre-16S rRNA. In Vibrio cholerae serotype O1 (strain ATCC 39541 / Classical Ogawa 395 / O395), this protein is Putative pre-16S rRNA nuclease.